The chain runs to 274 residues: Large ribosomal subunit protein uL2cy (274 aa).

2 disordered regions span residues 1–20 (MAIHLYKTSTPSTRNGAVDS) and 224–274 (NPVD…RRSK).

Belongs to the universal ribosomal protein uL2 family. Part of the 50S ribosomal subunit.

Its subcellular location is the plastid. The protein localises to the chloroplast. The polypeptide is Large ribosomal subunit protein uL2cy (rpl2-B) (Populus alba (White poplar)).